A 185-amino-acid polypeptide reads, in one-letter code: Crossover junction endodeoxyribonuclease RuvC (185 aa).

Catalysis depends on residues D7, E66, and D137. Residues D7, E66, and D137 each coordinate Mg(2+).

Belongs to the RuvC family. As to quaternary structure, homodimer which binds Holliday junction (HJ) DNA. The HJ becomes 2-fold symmetrical on binding to RuvC with unstacked arms; it has a different conformation from HJ DNA in complex with RuvA. In the full resolvosome a probable DNA-RuvA(4)-RuvB(12)-RuvC(2) complex forms which resolves the HJ. Requires Mg(2+) as cofactor.

The protein resides in the cytoplasm. The catalysed reaction is Endonucleolytic cleavage at a junction such as a reciprocal single-stranded crossover between two homologous DNA duplexes (Holliday junction).. Its function is as follows. The RuvA-RuvB-RuvC complex processes Holliday junction (HJ) DNA during genetic recombination and DNA repair. Endonuclease that resolves HJ intermediates. Cleaves cruciform DNA by making single-stranded nicks across the HJ at symmetrical positions within the homologous arms, yielding a 5'-phosphate and a 3'-hydroxyl group; requires a central core of homology in the junction. The consensus cleavage sequence is 5'-(A/T)TT(C/G)-3'. Cleavage occurs on the 3'-side of the TT dinucleotide at the point of strand exchange. HJ branch migration catalyzed by RuvA-RuvB allows RuvC to scan DNA until it finds its consensus sequence, where it cleaves and resolves the cruciform DNA. The sequence is that of Crossover junction endodeoxyribonuclease RuvC from Anaeromyxobacter dehalogenans (strain 2CP-C).